Here is a 404-residue protein sequence, read N- to C-terminus: Subtilisin-like proteinase Mp1 (404 aa).

An N-terminal signal peptide occupies residues 1 to 19 (MVGFKTLALHLAAVLPALA). Residues 20 to 112 (APVDKQATQV…VEPDQVWDLY (93 aa)) constitute a propeptide that is removed on maturation. The 79-residue stretch at 33–111 (SYIITLKQGA…FVEPDQVWDL (79 aa)) folds into the Inhibitor I9 domain. Residues 121–404 (PWGLGSISHR…NLIAFNGVTA (284 aa)) form the Peptidase S8 domain. N-linked (GlcNAc...) asparagine glycosylation is present at asparagine 133. Catalysis depends on charge relay system residues aspartate 154, histidine 186, and serine 347.

It belongs to the peptidase S8 family.

The protein resides in the secreted. This Magnaporthiopsis poae (Kentucky bluegrass fungus) protein is Subtilisin-like proteinase Mp1.